The following is a 254-amino-acid chain: NH(3)-dependent NAD(+) synthetase (254 aa).

Residue 32–39 participates in ATP binding; sequence GISGGVDS. Asp-38 provides a ligand contact to Mg(2+). Arg-113 is a deamido-NAD(+) binding site. Residue Thr-133 coordinates ATP. Glu-138 is a Mg(2+) binding site. Residues Lys-146 and Asp-153 each coordinate deamido-NAD(+). Residues Lys-162 and Ser-184 each contribute to the ATP site. Deamido-NAD(+) is bound at residue 244-245; sequence HK.

This sequence belongs to the NAD synthetase family. Homodimer.

It carries out the reaction deamido-NAD(+) + NH4(+) + ATP = AMP + diphosphate + NAD(+) + H(+). It participates in cofactor biosynthesis; NAD(+) biosynthesis; NAD(+) from deamido-NAD(+) (ammonia route): step 1/1. Catalyzes the ATP-dependent amidation of deamido-NAD to form NAD. Uses ammonia as a nitrogen source. The chain is NH(3)-dependent NAD(+) synthetase from Thermococcus sibiricus (strain DSM 12597 / MM 739).